A 280-amino-acid polypeptide reads, in one-letter code: Cell division protein SepF (280 aa).

The tract at residues 22-117 is disordered; it reads DYVDDRAPRA…DDYPEDAYGE (96 aa). 2 stretches are compositionally biased toward basic and acidic residues: residues 25–36 and 53–83; these read DDRAPRASERGG and RYGE…GADR.

Belongs to the SepF family. In terms of assembly, homodimer. Interacts with FtsZ.

It is found in the cytoplasm. Cell division protein that is part of the divisome complex and is recruited early to the Z-ring. Probably stimulates Z-ring formation, perhaps through the cross-linking of FtsZ protofilaments. Its function overlaps with FtsA. This is Cell division protein SepF from Nocardia farcinica (strain IFM 10152).